We begin with the raw amino-acid sequence, 355 residues long: Uroporphyrinogen decarboxylase (355 aa).

Substrate-binding positions include 36–40 (RQAGR), D85, Y160, S215, and H334.

Belongs to the uroporphyrinogen decarboxylase family. In terms of assembly, homodimer.

The protein resides in the cytoplasm. It catalyses the reaction uroporphyrinogen III + 4 H(+) = coproporphyrinogen III + 4 CO2. It participates in porphyrin-containing compound metabolism; protoporphyrin-IX biosynthesis; coproporphyrinogen-III from 5-aminolevulinate: step 4/4. Functionally, catalyzes the decarboxylation of four acetate groups of uroporphyrinogen-III to yield coproporphyrinogen-III. In Rhodococcus opacus (strain B4), this protein is Uroporphyrinogen decarboxylase.